Reading from the N-terminus, the 290-residue chain is ATP synthase gamma chain (290 aa).

It belongs to the ATPase gamma chain family. In terms of assembly, F-type ATPases have 2 components, CF(1) - the catalytic core - and CF(0) - the membrane proton channel. CF(1) has five subunits: alpha(3), beta(3), gamma(1), delta(1), epsilon(1). CF(0) has three main subunits: a, b and c.

It is found in the cell inner membrane. Its function is as follows. Produces ATP from ADP in the presence of a proton gradient across the membrane. The gamma chain is believed to be important in regulating ATPase activity and the flow of protons through the CF(0) complex. This chain is ATP synthase gamma chain, found in Buchnera aphidicola subsp. Acyrthosiphon pisum (strain APS) (Acyrthosiphon pisum symbiotic bacterium).